Here is a 270-residue protein sequence, read N- to C-terminus: DNA repair protein RecO (270 aa).

Belongs to the RecO family.

Involved in DNA repair and RecF pathway recombination. The chain is DNA repair protein RecO from Synechococcus sp. (strain WH7803).